Here is a 272-residue protein sequence, read N- to C-terminus: TLC domain-containing protein 4 C (272 aa).

The next 7 helical transmembrane spans lie at Phe16 to Tyr36, Val71 to Phe91, Ser103 to Tyr123, Leu128 to Ala148, Cys155 to Met175, Phe196 to Val216, and Val233 to Ile253. Positions Lys61–Leu261 constitute a TLC domain.

It belongs to the TLCD4 family.

It localises to the membrane. The polypeptide is TLC domain-containing protein 4 C (tlcd4c) (Dictyostelium discoideum (Social amoeba)).